Consider the following 342-residue polypeptide: UDP-3-O-acylglucosamine N-acyltransferase (342 aa).

Histidine 253 serves as the catalytic Proton acceptor.

The protein belongs to the transferase hexapeptide repeat family. LpxD subfamily. As to quaternary structure, homotrimer.

It carries out the reaction a UDP-3-O-[(3R)-3-hydroxyacyl]-alpha-D-glucosamine + a (3R)-hydroxyacyl-[ACP] = a UDP-2-N,3-O-bis[(3R)-3-hydroxyacyl]-alpha-D-glucosamine + holo-[ACP] + H(+). The protein operates within bacterial outer membrane biogenesis; LPS lipid A biosynthesis. In terms of biological role, catalyzes the N-acylation of UDP-3-O-acylglucosamine using 3-hydroxyacyl-ACP as the acyl donor. Is involved in the biosynthesis of lipid A, a phosphorylated glycolipid that anchors the lipopolysaccharide to the outer membrane of the cell. This chain is UDP-3-O-acylglucosamine N-acyltransferase, found in Rickettsia bellii (strain RML369-C).